Consider the following 757-residue polypeptide: Polyribonucleotide nucleotidyltransferase (757 aa).

Residues aspartate 482 and aspartate 488 each coordinate Mg(2+). The KH domain occupies 549–608 (PRMLSFYIDKDKISAAIGSKGKNIRSVCERSNAKIEIGDDGKVSVFATSGTEAEIAKSMM). Residues 618 to 686 (GSIVDVKVVR…KGGCPKLSRR (69 aa)) enclose the S1 motif domain. Residues 698–757 (GELYNEERKDGPNDRDNYYNNSFSRKPGGSHHKRPPRPHSGFSNRNRPKFGNNDSSSGFY) form a disordered region. The span at 702-714 (NEERKDGPNDRDN) shows a compositional bias: basic and acidic residues. The span at 725 to 734 (GGSHHKRPPR) shows a compositional bias: basic residues.

Belongs to the polyribonucleotide nucleotidyltransferase family. It depends on Mg(2+) as a cofactor.

The protein localises to the cytoplasm. The catalysed reaction is RNA(n+1) + phosphate = RNA(n) + a ribonucleoside 5'-diphosphate. Involved in mRNA degradation. Catalyzes the phosphorolysis of single-stranded polyribonucleotides processively in the 3'- to 5'-direction. The sequence is that of Polyribonucleotide nucleotidyltransferase from Wolbachia pipientis wMel.